The chain runs to 215 residues: Cytochrome b6 (215 aa).

The chain crosses the membrane as a helical span at residues I32–F52. Position 35 (C35) interacts with heme c. The heme b site is built by H86 and H100. The next 3 helical transmembrane spans lie at A90–F110, L116–Y136, and L186–I206. Residues H187 and H202 each contribute to the heme b site.

It belongs to the cytochrome b family. PetB subfamily. The 4 large subunits of the cytochrome b6-f complex are cytochrome b6, subunit IV (17 kDa polypeptide, PetD), cytochrome f and the Rieske protein, while the 4 small subunits are PetG, PetL, PetM and PetN. The complex functions as a dimer. It depends on heme b as a cofactor. Heme c serves as cofactor.

Its subcellular location is the plastid. It localises to the chloroplast thylakoid membrane. Functionally, component of the cytochrome b6-f complex, which mediates electron transfer between photosystem II (PSII) and photosystem I (PSI), cyclic electron flow around PSI, and state transitions. The sequence is that of Cytochrome b6 from Helianthus annuus (Common sunflower).